The chain runs to 238 residues: NAD(P)H-quinone oxidoreductase subunit K 1 (238 aa).

Cys-54, Cys-55, Cys-119, and Cys-150 together coordinate [4Fe-4S] cluster.

Belongs to the complex I 20 kDa subunit family. In terms of assembly, NDH-1 can be composed of about 15 different subunits; different subcomplexes with different compositions have been identified which probably have different functions. [4Fe-4S] cluster is required as a cofactor.

The protein resides in the cellular thylakoid membrane. The enzyme catalyses a plastoquinone + NADH + (n+1) H(+)(in) = a plastoquinol + NAD(+) + n H(+)(out). The catalysed reaction is a plastoquinone + NADPH + (n+1) H(+)(in) = a plastoquinol + NADP(+) + n H(+)(out). NDH-1 shuttles electrons from an unknown electron donor, via FMN and iron-sulfur (Fe-S) centers, to quinones in the respiratory and/or the photosynthetic chain. The immediate electron acceptor for the enzyme in this species is believed to be plastoquinone. Couples the redox reaction to proton translocation, and thus conserves the redox energy in a proton gradient. Cyanobacterial NDH-1 also plays a role in inorganic carbon-concentration. In Cyanothece sp. (strain PCC 7425 / ATCC 29141), this protein is NAD(P)H-quinone oxidoreductase subunit K 1.